The sequence spans 578 residues: Protein BONZAI 1 (578 aa).

Residue Gly-2 is the site of N-myristoyl glycine attachment. 2 C2 domains span residues 26–163 (ALGA…TSTL) and 176–303 (QPHH…NFSL). Residues Asp-63, Asp-69, Asp-122, and Asp-124 each coordinate Ca(2+). Residues 341–560 (NFMVAIDFTA…SVVQALLAEL (220 aa)) form the VWFA domain.

This sequence belongs to the copine family. In terms of assembly, interacts (via VWA domain) with BAP1 and BAP2. Interacts with HSP70-1 and HSP70-2. Requires Ca(2+) as cofactor. In terms of processing, based on mass spectrometry analysis, the N-peptide must be modified and there might be additional modifications other than myristoylation. In terms of tissue distribution, expressed in roots and flowers and, at higher levels, in leaves and stems. Strongly expressed in growing tissues. Not detected in green siliques.

It localises to the cell membrane. In terms of biological role, negative regulator of cell death and defense responses. Negative regulator of several R genes, including SNC1. May have effects in promoting growth and development. May function in membrane trafficking and in fusion of vesicles with plasma membrane at low temperature. Exhibits calcium-dependent phospholipid binding properties. The protein is Protein BONZAI 1 (BON1) of Arabidopsis thaliana (Mouse-ear cress).